Reading from the N-terminus, the 495-residue chain is Probable cobyric acid synthase (495 aa).

The GATase cobBQ-type domain maps to 256 to 441; the sequence is DVDIAVIRLT…LHGLFDNVNI (186 aa). The active-site Nucleophile is Cys334. The active site involves His433.

It belongs to the CobB/CobQ family. CobQ subfamily.

It participates in cofactor biosynthesis; adenosylcobalamin biosynthesis. In terms of biological role, catalyzes amidations at positions B, D, E, and G on adenosylcobyrinic A,C-diamide. NH(2) groups are provided by glutamine, and one molecule of ATP is hydrogenolyzed for each amidation. This is Probable cobyric acid synthase from Methanococcoides burtonii (strain DSM 6242 / NBRC 107633 / OCM 468 / ACE-M).